Consider the following 120-residue polypeptide: NAD(P)H-quinone oxidoreductase subunit 3, chloroplastic (120 aa).

Helical transmembrane passes span 9-29 (IFWV…LISG), 64-84 (MFAL…PWAM), and 88-108 (VLGV…IVGL).

The protein belongs to the complex I subunit 3 family. As to quaternary structure, NDH is composed of at least 16 different subunits, 5 of which are encoded in the nucleus.

Its subcellular location is the plastid. It localises to the chloroplast thylakoid membrane. It catalyses the reaction a plastoquinone + NADH + (n+1) H(+)(in) = a plastoquinol + NAD(+) + n H(+)(out). It carries out the reaction a plastoquinone + NADPH + (n+1) H(+)(in) = a plastoquinol + NADP(+) + n H(+)(out). NDH shuttles electrons from NAD(P)H:plastoquinone, via FMN and iron-sulfur (Fe-S) centers, to quinones in the photosynthetic chain and possibly in a chloroplast respiratory chain. The immediate electron acceptor for the enzyme in this species is believed to be plastoquinone. Couples the redox reaction to proton translocation, and thus conserves the redox energy in a proton gradient. This Cucumis sativus (Cucumber) protein is NAD(P)H-quinone oxidoreductase subunit 3, chloroplastic.